A 179-amino-acid chain; its full sequence is MQQNIIKVIVGSKNPVKINAAANAMALLFPEYEIQTQGMDAPSGVPAQPMTDSDTRQGAINRVHYCQQQIEADYYFAMEGGVDCFEFGPATFAYIAIAHQARLSIGRGALLPLPMQVYQALEAGEELGHVMDRLFNTVNIKQKGGAIGLLTRGHATRESNYTQAIILAMAPFLNPELYP.

E71 serves as a coordination point for Mg(2+). Position 71–72 (71–72) interacts with substrate; it reads EA.

The protein belongs to the YjjX NTPase family. Homodimer. Requires Mg(2+) as cofactor. The cofactor is Mn(2+).

The enzyme catalyses XTP + H2O = XDP + phosphate + H(+). It catalyses the reaction ITP + H2O = IDP + phosphate + H(+). Phosphatase that hydrolyzes non-canonical purine nucleotides such as XTP and ITP to their respective diphosphate derivatives. Probably excludes non-canonical purines from DNA/RNA precursor pool, thus preventing their incorporation into DNA/RNA and avoiding chromosomal lesions. This Shewanella sp. (strain MR-4) protein is Inosine/xanthosine triphosphatase.